A 401-amino-acid chain; its full sequence is Pleckstrin homology-like domain family A member 1 (401 aa).

3 disordered regions span residues 39-67, 190-222, and 293-401; these read IQKRREGARPVPFSERSQEDGRGPAARSS, QQQQQQQQQQQQQQQPGQGPAEPSQPSGPAVAS, and KSTR…SNSA. Residues 151 to 283 form the PH domain; the sequence is LKEGVLEKRS…AEITLQMVQY (133 aa). Residues 190–204 show a composition bias toward low complexity; sequence QQQQQQQQQQQQQQQ. Pro residues predominate over residues 308–344; that stretch reads PSQPQPQPQLQPQPQPQPQPQPQPQSQPQPQPQPKPQ. The tract at residues 311 to 346 is 15 X 2 AA repeats of P-Q; sequence PQPQPQLQPQPQPQPQPQPQPQSQPQPQPQPKPQPQ. The span at 352–378 shows a compositional bias: basic residues; it reads PHPHPHPHSHPHSHPHPHPHPHPHQIP. Residues 352 to 389 are 14 X 2 AA repeats of P-H; it reads PHPHPHPHSHPHSHPHPHPHPHPHQIPHPHPQPHSQPH.

As to quaternary structure, interacts with RPL14, EIF3S7 and PABPC4. As to expression, widely expressed with highest levels in pancreas. Strongly expressed by benign melanocytic nevi, and progressively reduced expressed in primary and metastatic melanomas (at protein level).

Its subcellular location is the cytoplasm. It localises to the cytoplasmic vesicle. It is found in the nucleus. The protein localises to the nucleolus. In terms of biological role, seems to be involved in regulation of apoptosis. May be involved in detachment-mediated programmed cell death. May mediate apoptosis during neuronal development. May be involved in regulation of anti-apoptotic effects of IGF1. May be involved in translational regulation. The sequence is that of Pleckstrin homology-like domain family A member 1 (PHLDA1) from Homo sapiens (Human).